A 480-amino-acid polypeptide reads, in one-letter code: Aspartyl/glutamyl-tRNA(Asn/Gln) amidotransferase subunit B (480 aa).

Belongs to the GatB/GatE family. GatB subfamily. Heterotrimer of A, B and C subunits.

The catalysed reaction is L-glutamyl-tRNA(Gln) + L-glutamine + ATP + H2O = L-glutaminyl-tRNA(Gln) + L-glutamate + ADP + phosphate + H(+). It carries out the reaction L-aspartyl-tRNA(Asn) + L-glutamine + ATP + H2O = L-asparaginyl-tRNA(Asn) + L-glutamate + ADP + phosphate + 2 H(+). In terms of biological role, allows the formation of correctly charged Asn-tRNA(Asn) or Gln-tRNA(Gln) through the transamidation of misacylated Asp-tRNA(Asn) or Glu-tRNA(Gln) in organisms which lack either or both of asparaginyl-tRNA or glutaminyl-tRNA synthetases. The reaction takes place in the presence of glutamine and ATP through an activated phospho-Asp-tRNA(Asn) or phospho-Glu-tRNA(Gln). The protein is Aspartyl/glutamyl-tRNA(Asn/Gln) amidotransferase subunit B of Streptococcus pneumoniae (strain Hungary19A-6).